Reading from the N-terminus, the 106-residue chain is MGSYMLFDSLIKLVENRNPLNHEQKLWLIDVINNTLNLEGKEKLYSLLIVHNKQQTKIYDPKEPFYDIEKIPVQLQLVWYEFTKMHLKSQNEDRRRKMSLYAGRSP.

This is an uncharacterized protein from Invertebrate iridescent virus 3 (IIV-3).